Consider the following 208-residue polypeptide: Guanylate kinase (208 aa).

Residues 4-185 (GNLYILSAPS…TLKDLQSILQ (182 aa)) form the Guanylate kinase-like domain. 11–18 (APSGAGKS) contributes to the ATP binding site.

Belongs to the guanylate kinase family.

The protein localises to the cytoplasm. The catalysed reaction is GMP + ATP = GDP + ADP. Functionally, essential for recycling GMP and indirectly, cGMP. This Haemophilus influenzae (strain 86-028NP) protein is Guanylate kinase.